The primary structure comprises 48 residues: Small, acid-soluble spore protein P (48 aa).

A compositionally biased stretch (basic and acidic residues) spans 1–12; sequence MTNKNDGKDMRK. The tract at residues 1-48 is disordered; the sequence is MTNKNDGKDMRKNAPKGAQPGQPEPLSGSKKVKNRNHTRQKHNSSHDM. Residues 30 to 48 are compositionally biased toward basic residues; sequence KKVKNRNHTRQKHNSSHDM.

The protein belongs to the SspP family.

The protein localises to the spore core. The chain is Small, acid-soluble spore protein P from Bacillus licheniformis (strain ATCC 14580 / DSM 13 / JCM 2505 / CCUG 7422 / NBRC 12200 / NCIMB 9375 / NCTC 10341 / NRRL NRS-1264 / Gibson 46).